The primary structure comprises 84 residues: MSNEINLQEFKMHEKDSGSSSYQIARLTQRIAHLTEHLSTNKHDVSSRRGLLKMVALRRKLLDYVKREDMAQYQSLIQRLGLRR.

It belongs to the universal ribosomal protein uS15 family. Part of the 30S ribosomal subunit. Forms a bridge to the 50S subunit in the 70S ribosome, contacting the 23S rRNA.

Its function is as follows. One of the primary rRNA binding proteins, it binds directly to 16S rRNA where it helps nucleate assembly of the platform of the 30S subunit by binding and bridging several RNA helices of the 16S rRNA. In terms of biological role, forms an intersubunit bridge (bridge B4) with the 23S rRNA of the 50S subunit in the ribosome. This Akkermansia muciniphila (strain ATCC BAA-835 / DSM 22959 / JCM 33894 / BCRC 81048 / CCUG 64013 / CIP 107961 / Muc) protein is Small ribosomal subunit protein uS15.